A 250-amino-acid polypeptide reads, in one-letter code: Homeobox protein DLL-1 (250 aa).

2 disordered regions span residues 40-66 (YPSL…SGSN) and 84-106 (SPYL…PDQQ). The span at 84 to 98 (SPYLQSCNSNTTTQS) shows a compositional bias: polar residues. Positions 125–184 (IRKPRTIYSSLQLQALNHRFQQTQYLALPERAELAASLGVTQTQVKIWFQNKRSKYKKLI) form a DNA-binding region, homeobox.

The protein belongs to the distal-less homeobox family.

The protein resides in the nucleus. The chain is Homeobox protein DLL-1 (dll1) from Xenopus laevis (African clawed frog).